The following is a 404-amino-acid chain: Cysteine desulfurase IscS (404 aa).

Pyridoxal 5'-phosphate is bound by residues 75–76 (AT), Asn155, Gln183, and 203–205 (TGH). Lys206 bears the N6-(pyridoxal phosphate)lysine mark. Position 243 (Thr243) interacts with pyridoxal 5'-phosphate. The Cysteine persulfide intermediate role is filled by Cys328. Cys328 lines the [2Fe-2S] cluster pocket.

This sequence belongs to the class-V pyridoxal-phosphate-dependent aminotransferase family. NifS/IscS subfamily. As to quaternary structure, homodimer. Forms a heterotetramer with IscU, interacts with other sulfur acceptors. Requires pyridoxal 5'-phosphate as cofactor.

It is found in the cytoplasm. The enzyme catalyses (sulfur carrier)-H + L-cysteine = (sulfur carrier)-SH + L-alanine. The protein operates within cofactor biosynthesis; iron-sulfur cluster biosynthesis. Its function is as follows. Master enzyme that delivers sulfur to a number of partners involved in Fe-S cluster assembly, tRNA modification or cofactor biosynthesis. Catalyzes the removal of elemental sulfur atoms from cysteine to produce alanine. Functions as a sulfur delivery protein for Fe-S cluster synthesis onto IscU, an Fe-S scaffold assembly protein, as well as other S acceptor proteins. This Enterobacter sp. (strain 638) protein is Cysteine desulfurase IscS.